The following is an 89-amino-acid chain: Small ribosomal subunit protein uS15 (89 aa).

It belongs to the universal ribosomal protein uS15 family. Part of the 30S ribosomal subunit. Forms a bridge to the 50S subunit in the 70S ribosome, contacting the 23S rRNA.

Its function is as follows. One of the primary rRNA binding proteins, it binds directly to 16S rRNA where it helps nucleate assembly of the platform of the 30S subunit by binding and bridging several RNA helices of the 16S rRNA. Functionally, forms an intersubunit bridge (bridge B4) with the 23S rRNA of the 50S subunit in the ribosome. This is Small ribosomal subunit protein uS15 from Streptococcus mutans serotype c (strain ATCC 700610 / UA159).